Here is a 415-residue protein sequence, read N- to C-terminus: 26S proteasome regulatory subunit 6B (415 aa).

203–210 serves as a coordination point for ATP; sequence GPPGCGKT.

The protein belongs to the AAA ATPase family.

It localises to the cytoplasm. It is found in the nucleus. Its function is as follows. The 26S proteasome is involved in the ATP-dependent degradation of ubiquitinated proteins. The regulatory (or ATPase) complex confers ATP dependency and substrate specificity to the 26S complex. The polypeptide is 26S proteasome regulatory subunit 6B (Manduca sexta (Tobacco hawkmoth)).